Here is an 819-residue protein sequence, read N- to C-terminus: Serine/threonine-protein phosphatase 1 regulatory subunit 10 (819 aa).

The TFIIS N-terminal domain occupies 73 to 147 (KLLNNWLTYA…NDWMAVIRSQ (75 aa)). Disordered stretches follow at residues 151–204 (QPAD…KFRS), 296–391 (KIKK…RKTV), and 495–785 (SVPD…GGDM). 2 stretches are compositionally biased toward basic and acidic residues: residues 153 to 165 (ADKE…EDAK) and 173 to 190 (KTSE…EKPK). Residues 305–327 (SPTSNKASPFDSKSPTEASSLTK) show a composition bias toward polar residues. The PP1-binding motif motif lies at 386 to 415 (KKRKTVSWPEESRLREYFYFELDETERVNV). The span at 495 to 504 (SVPDTPHEPD) shows a compositional bias: basic and acidic residues. Polar residues-rich tracts occupy residues 533-543 (MDQSTESQSPD) and 560-578 (MGSS…QEIL). The span at 589–604 (KPEDLMKQPDFSEKIK) shows a compositional bias: basic and acidic residues. A compositionally biased stretch (low complexity) spans 606-618 (LLGSLQNQNQNQG). Composition is skewed to pro residues over residues 635 to 663 (FPPP…PGPN) and 670 to 695 (HGPP…PPPN). Composition is skewed to basic and acidic residues over residues 704 to 715 (HGGERGGMRGGD) and 758 to 777 (HGDH…GDHR). The C3H1-type zinc finger occupies 785-813 (MSTRPTCRHFMMKGNCRYENNCAFYHPGI).

Component of the PNUTS-PP1 complex (also named PTW/PP1 complex).

It localises to the nucleus. Its subcellular location is the chromosome. Its function is as follows. Substrate-recognition component of the PNUTS-PP1 protein phosphatase complex, a protein phosphatase 1 (PP1) complex that promotes RNA polymerase II transcription pause-release, allowing transcription elongation. Promoter-proximal pausing by RNA polymerase II is a transcription halt following transcription initiation but prior to elongation, which acts as a checkpoint to control that transcripts are favorably configured for transcriptional elongation. The PNUTS-PP1 complex mediates the release of RNA polymerase II from promoter-proximal region of genes by catalyzing dephosphorylation of proteins involved in transcription. In some context, PPP1R10/PNUTS also acts as an inhibitor of protein phosphatase 1 (PP1) activity by preventing access to substrates. The sequence is that of Serine/threonine-protein phosphatase 1 regulatory subunit 10 (ppp1r10) from Xenopus laevis (African clawed frog).